Consider the following 330-residue polypeptide: Phosphate acyltransferase (330 aa).

This sequence belongs to the PlsX family. In terms of assembly, homodimer. Probably interacts with PlsY.

The protein resides in the cytoplasm. The catalysed reaction is a fatty acyl-[ACP] + phosphate = an acyl phosphate + holo-[ACP]. It participates in lipid metabolism; phospholipid metabolism. Functionally, catalyzes the reversible formation of acyl-phosphate (acyl-PO(4)) from acyl-[acyl-carrier-protein] (acyl-ACP). This enzyme utilizes acyl-ACP as fatty acyl donor, but not acyl-CoA. The protein is Phosphate acyltransferase of Bacillus mycoides (strain KBAB4) (Bacillus weihenstephanensis).